The chain runs to 151 residues: Large ribosomal subunit protein uL15 (151 aa).

The tract at residues 1–58 (MTSISLDSLKPNKGARKRKTRKGRGIAAGQGASCGFGMRGQKSRSGRPTRPGFEGGQM) is disordered. The span at 13-24 (KGARKRKTRKGR) shows a compositional bias: basic residues. Residues 26–38 (IAAGQGASCGFGM) show a composition bias toward gly residues.

It belongs to the universal ribosomal protein uL15 family. In terms of assembly, part of the 50S ribosomal subunit.

Its function is as follows. Binds to the 23S rRNA. The polypeptide is Large ribosomal subunit protein uL15 (Prochlorococcus marinus (strain SARG / CCMP1375 / SS120)).